The following is a 150-amino-acid chain: Putative ribosome maturation factor RimP (150 aa).

The protein belongs to the RimP family.

The protein resides in the cytoplasm. Functionally, required for maturation of 30S ribosomal subunits. The protein is Putative ribosome maturation factor RimP of Mycobacterium leprae (strain TN).